The primary structure comprises 162 residues: Nucleotide-binding protein Anae109_0095 (162 aa).

This sequence belongs to the YajQ family.

In terms of biological role, nucleotide-binding protein. In Anaeromyxobacter sp. (strain Fw109-5), this protein is Nucleotide-binding protein Anae109_0095.